Reading from the N-terminus, the 487-residue chain is N-succinylglutamate 5-semialdehyde dehydrogenase (487 aa).

NAD(+) is bound at residue 221–226 (GSSRTG). Active-site residues include Glu244 and Cys278.

This sequence belongs to the aldehyde dehydrogenase family. AstD subfamily.

It carries out the reaction N-succinyl-L-glutamate 5-semialdehyde + NAD(+) + H2O = N-succinyl-L-glutamate + NADH + 2 H(+). The protein operates within amino-acid degradation; L-arginine degradation via AST pathway; L-glutamate and succinate from L-arginine: step 4/5. Functionally, catalyzes the NAD-dependent reduction of succinylglutamate semialdehyde into succinylglutamate. This chain is N-succinylglutamate 5-semialdehyde dehydrogenase, found in Ectopseudomonas mendocina (strain ymp) (Pseudomonas mendocina).